The chain runs to 177 residues: Probable chemoreceptor glutamine deamidase CheD (177 aa).

The protein belongs to the CheD family.

It carries out the reaction L-glutaminyl-[protein] + H2O = L-glutamyl-[protein] + NH4(+). Its function is as follows. Probably deamidates glutamine residues to glutamate on methyl-accepting chemotaxis receptors (MCPs), playing an important role in chemotaxis. This Pseudomonas savastanoi pv. phaseolicola (strain 1448A / Race 6) (Pseudomonas syringae pv. phaseolicola (strain 1448A / Race 6)) protein is Probable chemoreceptor glutamine deamidase CheD.